The following is a 1228-amino-acid chain: ABC transporter B family member 16 (1228 aa).

6 helical membrane passes run 22–42, 69–89, 145–167, 171–193, 251–271, and 283–303; these read MGLG…LFFI, LAML…GYCW, LPNI…MLLW, IVGF…ALIG, GIAI…TWYG, and GTVS…GQAL. The region spanning 22-311 is the ABC transmembrane type-1 1 domain; sequence MGLGLIGAVG…ALSNLKYFSE (290 aa). The region spanning 346–582 is the ABC transporter 1 domain; it reads VEFNNVKCKY…DGKYTSLVRL (237 aa). An ATP-binding site is contributed by 381-388; it reads GGSGSGKS. Asn-529, Asn-593, and Asn-628 each carry an N-linked (GlcNAc...) asparagine glycan. The 289-residue stretch at 658–946 folds into the ABC transmembrane type-1 2 domain; that stretch reads ALCGCLSASL…AGTMTTDLAK (289 aa). The next 2 helical transmembrane spans lie at 667–687 and 700–720; these read LGGA…SVFF and IYVL…ISQQ. Asn-755 is a glycosylation site (N-linked (GlcNAc...) asparagine). 2 helical membrane-spanning segments follow: residues 781 to 801 and 805 to 825; these read LLVQ…VIAW and IVMI…RVLL. N-linked (GlcNAc...) asparagine glycosylation occurs at Asn-827. Transmembrane regions (helical) follow at residues 881–901 and 920–940; these read SWLA…TSAL and FFEL…AGTM. In terms of domain architecture, ABC transporter 2 spans 981–1219; that stretch reads ITFLNVDFAY…GPTGSYFSLV (239 aa). N-linked (GlcNAc...) asparagine glycosylation is present at Asn-1001. 1016–1023 is a binding site for ATP; sequence GPSRSGKS.

Belongs to the ABC transporter superfamily. ABCB family. Multidrug resistance exporter (TC 3.A.1.201) subfamily.

It is found in the membrane. This chain is ABC transporter B family member 16 (ABCB16), found in Arabidopsis thaliana (Mouse-ear cress).